Consider the following 981-residue polypeptide: NAD(+) hydrolase tir-1 (981 aa).

Disordered stretches follow at residues 1 to 31 (MLPN…RSLK), 74 to 128 (QNEQ…PTQP), and 173 to 225 (LSTP…PVDQ). 2 stretches are compositionally biased toward polar residues: residues 12–23 (PSFQSLNNNNQR) and 74–85 (QNEQDGETTSTD). The span at 87–97 (AFFELDDDDDL) shows a compositional bias: acidic residues. Residues 98–114 (SSPSVPGSPVDPPSISV) are compositionally biased toward low complexity. A compositionally biased stretch (pro residues) spans 115-128 (PLPPKSAPPCPTQP). Residues 182 to 200 (EEMHNGQVRKESEYRRFKS) are compositionally biased toward basic and acidic residues. SAM domains lie at 614-678 (WTCA…LKVA) and 684-750 (VDES…AKHP). The region spanning 760-857 (KQIDVFISYR…EHQKNIIPIF (98 aa)) is the TIR domain. An NAD(+)-binding site is contributed by 769-770 (RR). Glu842 is a catalytic residue. 3 stretches are compositionally biased toward polar residues: residues 908-939 (TTPT…TGPS), 954-963 (FTPTGSQERA), and 972-981 (PSASTTSDRN). The disordered stretch occupies residues 908 to 981 (TTPTTKEMPS…PSASTTSDRN (74 aa)).

This sequence belongs to the SARM1 family. In terms of assembly, homodimer. Interacts with rab-1, pal-1 and unc-43. As to expression, highly expressed in hypodermis. Localizes to postsynaptic regions of axons.

It is found in the cytoplasm. It carries out the reaction NAD(+) + H2O = ADP-D-ribose + nicotinamide + H(+). Its function is as follows. NAD(+) hydrolase, which plays a key role in non-apoptotic cell death by regulating NAD(+) metabolism. In response to stress, homooligomerizes and catalyzes cleavage of NAD(+) into ADP-D-ribose (ADPR) and nicotinamide; NAD(+) cleavage promoting non-apoptotic neuronal cell death. In males, involved in non-apoptotic death of the linker cell which guides gonad elongation during larval development. Required for both innate immune response and specification of AWC(OFF) neuron. During late embryogenesis, it acts downstream of CAMKII (unc-43) to regulate specification of asymmetric odorant receptors in AWC(OFF) neuron via the nsy-1/ASK1 pmk-1/p38 MAP kinase signaling cascade. Required to localize nsy-1 to postsynaptic regions of AWC neuron, suggesting that it may act by assembling a signaling complex that regulate odorant receptor expression. Also plays a central role in resistance to infection to a broad range of bacterial and fungi pathogens, possibly by activating pmk-1, independently of the NF-kappa-B pathway. Required for expression of antimicrobial peptides nlp-29 and nlp-31. Its role in immune response and neuron specification may be mediated by the same nsy-1/ASK1 pmk-1/p38 MAP kinase cascade signaling pathway. Involved in the response to anoxic conditions probably by activating the p38 pathway composed of nsy-1/sek-1/pmk-1. Involved in regulation of the serotonergic response of ADF neurons to pathogenic food. In addition, plays a role in the up-regulation of gcs-1 upon arsenite treatment, most likely through activation of pmk-1, to confer protection against toxicity induced by heavy metals. In terms of biological role, regulates expression of antimicrobial peptide nlp-29 in response to fungal infection or physical injury. This is NAD(+) hydrolase tir-1 from Caenorhabditis elegans.